The sequence spans 263 residues: Receptor-transporting protein 1 (263 aa).

At 1–238 the chain is on the cytoplasmic side; the sequence is MRIFRPWRLR…ETGSGWNFCS (238 aa). The 3CxxC-type zinc-finger motif lies at 88–197; sequence ASGRFHCSWC…GEFCEACQEG (110 aa). Residues 239-259 form a helical membrane-spanning segment; that stretch reads IPWCLFWATVLLLIIYLQLSF. Topologically, residues 260-263 are extracellular; that stretch reads RSSV.

Belongs to the TMEM7 family. Interacts with olfactory receptors.

Its subcellular location is the cell membrane. Functionally, specifically promotes functional cell surface expression of olfactory receptors, but not of other GPCRs. The protein is Receptor-transporting protein 1 (RTP1) of Macaca fascicularis (Crab-eating macaque).